The chain runs to 142 residues: Probable histone H2AXb (142 aa).

Over residues Met-1 to Gly-12 the composition is skewed to gly residues. Residues Met-1–Lys-28 are disordered. Phosphoserine; by ATM and ATR is present on Ser-139. A [ST]-Q motif motif is present at residues Ser-139 to Gln-140.

It belongs to the histone H2A family. The nucleosome is a histone octamer containing two molecules each of H2A, H2B, H3 and H4 assembled in one H3-H4 heterotetramer and two H2A-H2B heterodimers. The octamer wraps approximately 147 bp of DNA. Interacts with numerous proteins required for DNA damage signaling and repair when phosphorylated on Ser-139. In terms of processing, phosphorylated to form H2AXS139ph (gamma-H2AX) in response to DNA double strand breaks (DSBs) generated by exogenous genotoxic agents and by stalled replication forks, and may also occur during meiotic recombination events. Phosphorylation can extend up to several thousand nucleosomes from the actual site of the DSB and may mark the surrounding chromatin for recruitment of proteins required for DNA damage signaling and repair. Widespread phosphorylation may also serve to amplify the damage signal or aid repair of persistent lesions. H2AXS139ph in response to ionizing radiation is mediated by ATM while defects in DNA replication induce H2AXS139ph subsequent to activation of ATR. Dephosphorylation of H2AXS139ph by PP2A is required for DNA DSB repair. As to expression, expressed in meristems and dividing cells.

The protein localises to the nucleus. It is found in the chromosome. In terms of biological role, variant histone H2A which replaces conventional H2A in a subset of nucleosomes. Nucleosomes wrap and compact DNA into chromatin, limiting DNA accessibility to the cellular machineries which require DNA as a template. Histones thereby play a central role in transcription regulation, DNA repair, DNA replication and chromosomal stability. DNA accessibility is regulated via a complex set of post-translational modifications of histones, also called histone code, and nucleosome remodeling. Required for checkpoint-mediated arrest of cell cycle progression in response to low doses of ionizing radiation and for efficient repair of DNA double strand breaks (DSBs) specifically when modified by C-terminal phosphorylation. The polypeptide is Probable histone H2AXb (Arabidopsis thaliana (Mouse-ear cress)).